We begin with the raw amino-acid sequence, 153 residues long: MTTLNTTGKVLYKKKMRVGRGIGSGKGKTSGRGVKGQKSRSGVAIKAFEGGQMPLYRRLPKRGFNAIKRYQAVIAIMNLEKIQTFITEKTINSGDVINMALLKKLKLINKNSQKLKILGTGEIKDKVNIEADLISKSAVEKLEKAGGTIQLKK.

This sequence belongs to the universal ribosomal protein uL15 family. In terms of assembly, part of the 50S ribosomal subunit.

Binds to the 23S rRNA. The chain is Large ribosomal subunit protein uL15 from Pelagibacter ubique (strain HTCC1062).